The sequence spans 396 residues: Elongation factor Tu (396 aa).

One can recognise a tr-type G domain in the interval 10–206; the sequence is KAHVNIGTIG…AVDEYIPDPV (197 aa). Residues 19 to 26 form a G1 region; the sequence is GHVDHGKT. 19 to 26 contributes to the GTP binding site; the sequence is GHVDHGKT. Residue threonine 26 coordinates Mg(2+). The segment at 62 to 66 is G2; sequence GITIN. Positions 83–86 are G3; it reads DAPG. GTP is bound by residues 83–87 and 138–141; these read DAPGH and NKSD. A G4 region spans residues 138 to 141; it reads NKSD. Residues 176-178 form a G5 region; that stretch reads SAL.

Belongs to the TRAFAC class translation factor GTPase superfamily. Classic translation factor GTPase family. EF-Tu/EF-1A subfamily. In terms of assembly, monomer.

Its subcellular location is the cytoplasm. The enzyme catalyses GTP + H2O = GDP + phosphate + H(+). Its function is as follows. GTP hydrolase that promotes the GTP-dependent binding of aminoacyl-tRNA to the A-site of ribosomes during protein biosynthesis. The protein is Elongation factor Tu of Micrococcus luteus (Micrococcus lysodeikticus).